A 310-amino-acid chain; its full sequence is p-hydroxybenzoic acid efflux pump subunit AaeA (310 aa).

Residues A12 to Y32 traverse the membrane as a helical segment.

The protein belongs to the membrane fusion protein (MFP) (TC 8.A.1) family.

The protein resides in the cell inner membrane. Its function is as follows. Forms an efflux pump with AaeB. This Shigella sonnei (strain Ss046) protein is p-hydroxybenzoic acid efflux pump subunit AaeA.